The chain runs to 248 residues: ATP synthase subunit a, chloroplastic (248 aa).

5 consecutive transmembrane segments (helical) span residues Gln-38–Val-58, Val-96–Leu-116, Ile-135–Ser-155, Leu-200–Leu-220, and Gly-221–Gly-241.

It belongs to the ATPase A chain family. As to quaternary structure, F-type ATPases have 2 components, CF(1) - the catalytic core - and CF(0) - the membrane proton channel. CF(1) has five subunits: alpha(3), beta(3), gamma(1), delta(1), epsilon(1). CF(0) has four main subunits: a, b, b' and c.

Its subcellular location is the plastid. It is found in the chloroplast thylakoid membrane. In terms of biological role, key component of the proton channel; it plays a direct role in the translocation of protons across the membrane. The chain is ATP synthase subunit a, chloroplastic from Amborella trichopoda.